A 621-amino-acid chain; its full sequence is MADSPWDEIREKFQTALALSRVELHKNPEKEPYKSKYSARALLEEVKALLGPAPEDEDERPQADDSLGAGEHALGLPAELVEAEGPVAQGAVRRAVIEFHLGVNHIDTEELSAGEEHLVKCLRLLRKYRLSHDCVSLYIQAQNNLGILWSEREEIETAQAYLESSEALYNQYMKEIGSPPLDPTEHFLPEEEKLPEQERSKRFEKVYTHNLYYLAQVYQHMEMFEKAAHYCHSTLKRQLEHNAYHPMEWAINAATLSQFYINKQCFMEARHCLSAANVIFGQIGKIRTTEDTTEAEGDVPELYHQRKGEIARCWIKYCLTLMQNAQLSMQDNIGELDLDKQSELRALRKKELDEEESVRKKAVQFGTGELCDAISAVEEKVSYLRPLDFEEARELFLTGQHYVFEAKEFFQIDGYVTDHIEVVQDHSALFKVLAFFETDMERRCKMHKRRIAMLEPLIVDLNPQYYLLVNRQIQFEIAHAYYDMMDLKVAIADKLRDPDSHIVKKINNLNKSALKYYQLFLDSLRDPNKVFPEHIGEDVLRPAMLAKFRVARLYGKIITADPKKELENLATSLEHYKFIVDYCEKHPEAAQEIEVELELSKEMVSLLPTKMERFRTKMALT.

Serine 178 carries the post-translational modification Phosphoserine.

Belongs to the KIF-binding protein family. Interacts with KIF1B; positively regulates KIF1B microtubule motor activity. Interacts with STMN2.

It is found in the cytoplasm. Its subcellular location is the cytoskeleton. In terms of biological role, activator of KIF1B plus-end-directed microtubule motor activity. Required for organization of axonal microtubules, and axonal outgrowth and maintenance during peripheral and central nervous system development. This Bos taurus (Bovine) protein is KIF-binding protein (KIFBP).